Reading from the N-terminus, the 532-residue chain is Metal-staphylopine-binding protein CntA (532 aa).

The first 20 residues, methionine 1–glycine 20, serve as a signal peptide directing secretion. Cysteine 21 carries the N-palmitoyl cysteine lipid modification. Cysteine 21 carries the S-diacylglycerol cysteine lipid modification. 3 residues coordinate staphylopine: arginine 165, arginine 418, and asparagine 448.

Belongs to the bacterial solute-binding protein 5 family. In terms of assembly, the complex is composed of two ATP-binding proteins (CntD and CntF), two transmembrane proteins (CntB and CntC) and a solute-binding protein (CntA).

The protein localises to the cell membrane. In terms of biological role, part of the ABC transporter complex CntABCDF (Opp1) involved in the uptake of metal in complex with the metallophore staphylopine (StP). May be involved in the import of a large array of divalent metals ions such as nickel, cobalt, zinc, copper and iron. Binds the metal via the metallophore StP, and transfers the StP-metal complex to the membrane-bound permease. The chain is Metal-staphylopine-binding protein CntA from Staphylococcus aureus (strain Mu50 / ATCC 700699).